The following is a 288-amino-acid chain: Quinate/shikimate dehydrogenase (288 aa).

Substrate is bound by residues Lys71 and Asp107. Residues 132 to 135, 155 to 158, Lys205, 232 to 235, and Gly255 each bind NAD(+); these read AGGA, NRKD, and CVYN.

The protein belongs to the shikimate dehydrogenase family. Homodimer.

The catalysed reaction is L-quinate + NAD(+) = 3-dehydroquinate + NADH + H(+). It carries out the reaction L-quinate + NADP(+) = 3-dehydroquinate + NADPH + H(+). The enzyme catalyses shikimate + NADP(+) = 3-dehydroshikimate + NADPH + H(+). It catalyses the reaction shikimate + NAD(+) = 3-dehydroshikimate + NADH + H(+). It functions in the pathway metabolic intermediate biosynthesis; chorismate biosynthesis; chorismate from D-erythrose 4-phosphate and phosphoenolpyruvate: step 4/7. The actual biological function of YdiB remains unclear, nor is it known whether 3-dehydroshikimate or quinate represents the natural substrate. Catalyzes the reversible NAD-dependent reduction of both 3-dehydroshikimate (DHSA) and 3-dehydroquinate to yield shikimate (SA) and quinate, respectively. It can use both NAD or NADP for catalysis, however it has higher catalytic efficiency with NAD. The sequence is that of Quinate/shikimate dehydrogenase from Salmonella agona (strain SL483).